The sequence spans 459 residues: Transcription factor 7-like 2 (459 aa).

A compositionally biased stretch (gly residues) spans 1-11; it reads MPQLNGGGGDD. The CTNNB1-binding stretch occupies residues 1–53; sequence MPQLNGGGGDDLGANDELISFKDEGEQEEKNSENSSAERDLADVKSSLVNESE. Residues 1-96 form a disordered region; that stretch reads MPQLNGGGGD…AKRQDGGLFK (96 aa). Over residues 19–43 the composition is skewed to basic and acidic residues; the sequence is ISFKDEGEQEEKNSENSSAERDLAD. Residue Lys-22 forms a Glycyl lysine isopeptide (Lys-Gly) (interchain with G-Cter in SUMO2) linkage. Residues 47–56 are compositionally biased toward polar residues; it reads SLVNESETNQ. Basic and acidic residues predominate over residues 63-91; that stretch reads EAERRPPPRSESFRDKSRESLEEAAKRQD. Phosphothreonine; by NLK is present on residues Thr-178 and Thr-189. The interval 178–372 is mediates interaction with MAD2L2; the sequence is TPLITYSNEH…RRWHALSREE (195 aa). Residues 295–305 are compositionally biased toward polar residues; sequence TVKQESSQSDV. Disordered stretches follow at residues 295–327 and 397–418; these read TVKQESSQSDVGSLHSSKHQDSKKEEEKKKPHI and RDNYGKKKKRKRDKQPGETNEH. Lys-297 is covalently cross-linked (Glycyl lysine isopeptide (Lys-Gly) (interchain with G-Cter in SUMO)). Residues 312–323 are compositionally biased toward basic and acidic residues; the sequence is KHQDSKKEEEKK. A DNA-binding region (HMG box) is located at residues 327-395; it reads IKKPLNAFML…LHMQLYPGWS (69 aa). Positions 402–408 match the Nuclear localization signal motif; that stretch reads KKKKRKR.

The protein belongs to the TCF/LEF family. In terms of assembly, interacts with TGFB1I1. Interacts with SPIN1. Interacts with CTNNB1 (via the armadillo repeat); forms stable transcription complex. Interacts with EP300. Interacts with NLK. Interacts with CCDC85B (probably through the HMG box); prevents interaction with CTNNB1. Interacts with TNIK. Interacts with MAD2L2; prevents TCF7L2/TCF4 binding to promZIPK/DAPK3oters, negatively modulating its transcriptional activity. Interacts with ZIPK/DAPK3. Interacts with XIAP/BIRC4 and TLE3. Interacts with DDIT3/CHOP. The CTNNB1 and TCF7L2/TCF4 complex interacts with PML (isoform PML-4). Identified in a complex with CTNNB1 and FERMT2. Interacts with C11orf84/SPINDOC in a SPIN1-dependent manner. Interacts with DAZAP2; the interaction results in localization of DAZAP2 to the nucleus. Phosphorylated at Thr-178 and/or Thr-189 by NLK. Phosphorylation by NLK at these sites inhibits DNA-binding by TCF7L2/TCF4, thereby preventing transcriptional activation of target genes of the canonical Wnt/beta-catenin signaling pathway. In terms of processing, polysumoylated. Sumoylation is enhanced by PIAS family members and desumoylation is enhanced by SENP2. Sumoylation/desumoylation regulates TCF7L2/TCF4 transcription activity in the Wnt/beta-catenin signaling pathway without altering interaction with CTNNB1 nor binding to DNA. In terms of tissue distribution, detected in adult brain and liver, and at lower levels in intestine, with a clear increase from the distal colon to the duodenum. Detected at low levels in heart, lung, kidney, pituitary and testis.

It localises to the nucleus. The protein localises to the PML body. In terms of biological role, participates in the Wnt signaling pathway and modulates MYC expression by binding to its promoter in a sequence-specific manner. Acts as a repressor in the absence of CTNNB1, and as activator in its presence. Activates transcription from promoters with several copies of the Tcf motif CCTTTGATC in the presence of CTNNB1. TLE1, TLE2, TLE3 and TLE4 repress transactivation mediated by TCF7L2/TCF4 and CTNNB1. Expression of dominant-negative mutants results in cell-cycle arrest in G1. Necessary for the maintenance of the epithelial stem-cell compartment of the small intestine. This Mus musculus (Mouse) protein is Transcription factor 7-like 2 (Tcf7l2).